The chain runs to 250 residues: Small ribosomal subunit protein uS2 (250 aa).

Belongs to the universal ribosomal protein uS2 family.

This is Small ribosomal subunit protein uS2 from Marinobacter nauticus (strain ATCC 700491 / DSM 11845 / VT8) (Marinobacter aquaeolei).